We begin with the raw amino-acid sequence, 146 residues long: Putative nickel-responsive regulator 1 (146 aa).

Ni(2+) is bound by residues H81, H92, Y94, and C100.

It belongs to the transcriptional regulatory CopG/NikR family. Requires Ni(2+) as cofactor.

Functionally, transcriptional regulator. The protein is Putative nickel-responsive regulator 1 of Methanosarcina mazei (strain ATCC BAA-159 / DSM 3647 / Goe1 / Go1 / JCM 11833 / OCM 88) (Methanosarcina frisia).